The sequence spans 149 residues: Putative pre-16S rRNA nuclease (149 aa).

It belongs to the YqgF nuclease family.

The protein resides in the cytoplasm. Its function is as follows. Could be a nuclease involved in processing of the 5'-end of pre-16S rRNA. This chain is Putative pre-16S rRNA nuclease, found in Burkholderia orbicola (strain MC0-3).